Consider the following 290-residue polypeptide: MKKKALLPLFLGIMIFLAGCDYSTPEKQDGFFFNTFVQPMKHLLQWLGNDVFHNNFGLAIIVLVLFIRLILLPFMLSNYKNSHMMREKMKVAKPEVDGIQEKVKRARTQEEKMAANQELMEVYKKYDMNPMKSMLGCLPILIQMPIIMGLYFVLKDKLVNGLSEHPHFLWFNLTKPDIWITVIAGVLYFIQAVVSSKTMPQEQRQMGYMMMVISPIMIIWISLQASSALGLYWSVSALFLVIQTHFANIYYSKLAKKEVQPFIEKYEREHNPYSKKKGKNTQVVSKKNKK.

Residues 1–19 (MKKKALLPLFLGIMIFLAG) form the signal peptide. A lipid anchor (N-palmitoyl cysteine) is attached at C20. C20 carries S-diacylglycerol cysteine lipidation. Helical transmembrane passes span 56–76 (FGLA…PFML), 134–154 (MLGC…YFVL), 176–196 (PDIW…VVSS), 211–231 (MVIS…ALGL), and 232–252 (YWSV…IYYS). Positions 270–290 (HNPYSKKKGKNTQVVSKKNKK) are disordered. Residues 280–290 (NTQVVSKKNKK) are compositionally biased toward polar residues.

This sequence belongs to the OXA1/ALB3/YidC family. Type 2 subfamily.

It localises to the cell membrane. Functionally, required for the insertion and/or proper folding and/or complex formation of integral membrane proteins into the membrane. Involved in integration of membrane proteins that insert both dependently and independently of the Sec translocase complex, as well as at least some lipoproteins. The polypeptide is Membrane protein insertase YidC 1 (Staphylococcus epidermidis (strain ATCC 12228 / FDA PCI 1200)).